The chain runs to 245 residues: MYPVDLHMHTVASTHAYSTLHDYIAEAKLKNIKLFAITDHGPDMADAPHYWHFMNMRVWPRLVDGVGILRGIEANIKNLDGDIDCTGPMLDAVDLLIAGFHEPVFPPQDKAANTQAMIATMAQGNVHIISHPGNPKYPVDIPAIAQAAAKYNVALELNNSSFAHSRKGSEANCRAIAAAVRDAGGWLALGSDSHIAYALGIFEHCERIIAEVNFPQERILNVSPRRLLDYLEQRGRPAIPELAEL.

Positions 7, 9, 15, 40, 73, 101, 131, 192, and 194 each coordinate Zn(2+).

This sequence belongs to the PHP family. Homotrimer. Zn(2+) is required as a cofactor.

This Yersinia pseudotuberculosis serotype I (strain IP32953) protein is Probable phosphatase YPTB2019.